Reading from the N-terminus, the 149-residue chain is Major outer capsid protein (149 aa).

Homotrimer.

Its subcellular location is the virion. Its function is as follows. Assembles to form an icosahedral capsid with a T=13 symmetry. Drives the penetration of the inner capsid (core) into the cytoplasm. This chain is Major outer capsid protein (P8), found in Pseudomonas phage phi6 (Bacteriophage phi-6).